We begin with the raw amino-acid sequence, 180 residues long: NAD(P)H-quinone oxidoreductase subunit I, chloroplastic (180 aa).

2 consecutive 4Fe-4S ferredoxin-type domains span residues 55-84 and 95-124; these read GRIH…VDWK and LNYS…MTEE. [4Fe-4S] cluster contacts are provided by cysteine 64, cysteine 67, cysteine 70, cysteine 74, cysteine 104, cysteine 107, cysteine 110, and cysteine 114.

Belongs to the complex I 23 kDa subunit family. NDH is composed of at least 16 different subunits, 5 of which are encoded in the nucleus. Requires [4Fe-4S] cluster as cofactor.

It localises to the plastid. The protein localises to the chloroplast thylakoid membrane. The catalysed reaction is a plastoquinone + NADH + (n+1) H(+)(in) = a plastoquinol + NAD(+) + n H(+)(out). It catalyses the reaction a plastoquinone + NADPH + (n+1) H(+)(in) = a plastoquinol + NADP(+) + n H(+)(out). Its function is as follows. NDH shuttles electrons from NAD(P)H:plastoquinone, via FMN and iron-sulfur (Fe-S) centers, to quinones in the photosynthetic chain and possibly in a chloroplast respiratory chain. The immediate electron acceptor for the enzyme in this species is believed to be plastoquinone. Couples the redox reaction to proton translocation, and thus conserves the redox energy in a proton gradient. The polypeptide is NAD(P)H-quinone oxidoreductase subunit I, chloroplastic (Nandina domestica (Heavenly bamboo)).